The following is a 207-amino-acid chain: High frequency lysogenization protein HflD homolog (207 aa).

Belongs to the HflD family.

The protein localises to the cytoplasm. Its subcellular location is the cell inner membrane. This Pseudomonas fluorescens (strain ATCC BAA-477 / NRRL B-23932 / Pf-5) protein is High frequency lysogenization protein HflD homolog.